We begin with the raw amino-acid sequence, 357 residues long: UDP-N-acetylglucosamine--N-acetylmuramyl-(pentapeptide) pyrophosphoryl-undecaprenol N-acetylglucosamine transferase (357 aa).

UDP-N-acetyl-alpha-D-glucosamine is bound by residues 12-14, asparagine 124, arginine 163, serine 189, isoleucine 243, 262-267, and glutamine 288; these read TGG and ALTVSE.

It belongs to the glycosyltransferase 28 family. MurG subfamily.

The protein resides in the cell inner membrane. It carries out the reaction di-trans,octa-cis-undecaprenyl diphospho-N-acetyl-alpha-D-muramoyl-L-alanyl-D-glutamyl-meso-2,6-diaminopimeloyl-D-alanyl-D-alanine + UDP-N-acetyl-alpha-D-glucosamine = di-trans,octa-cis-undecaprenyl diphospho-[N-acetyl-alpha-D-glucosaminyl-(1-&gt;4)]-N-acetyl-alpha-D-muramoyl-L-alanyl-D-glutamyl-meso-2,6-diaminopimeloyl-D-alanyl-D-alanine + UDP + H(+). It functions in the pathway cell wall biogenesis; peptidoglycan biosynthesis. Functionally, cell wall formation. Catalyzes the transfer of a GlcNAc subunit on undecaprenyl-pyrophosphoryl-MurNAc-pentapeptide (lipid intermediate I) to form undecaprenyl-pyrophosphoryl-MurNAc-(pentapeptide)GlcNAc (lipid intermediate II). This chain is UDP-N-acetylglucosamine--N-acetylmuramyl-(pentapeptide) pyrophosphoryl-undecaprenol N-acetylglucosamine transferase, found in Pseudomonas aeruginosa (strain LESB58).